A 300-amino-acid chain; its full sequence is MLSTMQTVGAVLMLSIVLVAGRKRHHCDSKYYELTPAHTMCLTDKPNAVAVPLTQETEHEILEMHNKIRADVTDAANMLKMEWDERLATVAQKWAMQCILGHDSGRRGEPDLPGSVGQNVAWSSGDLTFLGAVQMWADEIVDFQYGVWTDGTGHYIQQVFAGASRIGCGQSACGNNKYFVCNYYKGTMGDEPYQLGRPCSQCRSSCQHIRGSQGRWGSLCDCTNGPDACFNGGIFNINTCQCECSGIWGGADCQEKHCPNEDFDDMCRYPDALRRPQHWCQYDNFQSDCPILCGYCPNPN.

An N-terminal signal peptide occupies residues 1–21 (MLSTMQTVGAVLMLSIVLVAG). The propeptide occupies 22–24 (RKR). Residues 62-183 (LEMHNKIRAD…GNNKYFVCNY (122 aa)) form the SCP domain.

In terms of processing, contains 11 disulfide bonds. Expressed by the venom duct.

It is found in the secreted. In terms of biological role, protease responsible for cleaving the conotoxins from their propeptide precursors. The target propeptide requires minimum four residues including a leucine N-terminal of the cleavage site for efficient substrate processing (example: Xaa-Xaa-Xaa-Leu-Asn-Lys-Arg-toxin). This Conus textile (Cloth-of-gold cone) protein is Cysteine-rich venom protein.